Reading from the N-terminus, the 316-residue chain is MANLKEIRDRIKSVKNTRKITEAMRLVAAAKVRRAQEQVLRSRPFADRLARILENLQSRMRFEDASSPLMEQRDVETITLVSVTGDRGLCGGYNANIIKRTEQRFAELTGKGFKVKLVLIGNKAIGYFTKRDYPVQATFSGLEQVPTADEANTISTDVLAEFIGAGTDRVELIFTKFINLVSCKPVVQTLLPLDPQDIADPEDEIFRLTTKDGRLTVEPGAGPANTEPKIPSDIVFEQTPEQLLNALLPLYLQNQLLRSLQESAASELASRMTAMNNASDNAKELAKTLTLDYNKARQAAITQEILEVAGGAAAVG.

The protein belongs to the ATPase gamma chain family. In terms of assembly, F-type ATPases have 2 components, CF(1) - the catalytic core - and CF(0) - the membrane proton channel. CF(1) has five subunits: alpha(3), beta(3), gamma(1), delta(1), epsilon(1). CF(0) has three main subunits: a, b and c.

The protein resides in the cellular thylakoid membrane. Functionally, produces ATP from ADP in the presence of a proton gradient across the membrane. The gamma chain is believed to be important in regulating ATPase activity and the flow of protons through the CF(0) complex. This Parasynechococcus marenigrum (strain WH8102) protein is ATP synthase gamma chain.